Consider the following 286-residue polypeptide: MANAKEIKTKIASVQNTQKITSAMEMVAASKMRKAQDRMASSRPYAENMRKVIGHVAQGSLEYKHPYLEVREAKRVGYIVVSTDRGLCGGLNVNLFKKVVADVKKQREAGAEVEFCPIGARSVQFFNSFGGQVSAHASGLGDAPKLADLIGTVRVMLQAYNEGKLDRLYVVFNKFVNTMSQTPVIEQLLPLPKSEEDEISHHWDYLYEPDPKELLDTLLVRYVESQVYQGVVENIASEQAARMVAMKAATDNAGELISDLELVYNKARQAAITQELSEIVSGAAAV.

Belongs to the ATPase gamma chain family. In terms of assembly, F-type ATPases have 2 components, CF(1) - the catalytic core - and CF(0) - the membrane proton channel. CF(1) has five subunits: alpha(3), beta(3), gamma(1), delta(1), epsilon(1). CF(0) has three main subunits: a, b and c.

The protein resides in the cell inner membrane. Functionally, produces ATP from ADP in the presence of a proton gradient across the membrane. The gamma chain is believed to be important in regulating ATPase activity and the flow of protons through the CF(0) complex. This is ATP synthase gamma chain from Shewanella woodyi (strain ATCC 51908 / MS32).